Here is a 1726-residue protein sequence, read N- to C-terminus: Protein NLRC5 (1726 aa).

The region spanning Arg-207–Ala-537 is the NACHT domain. An ATP-binding site is contributed by Gly-213–Thr-220. LRR repeat units follow at residues Leu-879 to Pro-902, Leu-904 to Leu-925, Asn-1002 to Met-1025, Ala-1026 to Gln-1048, Cys-1103 to Gln-1126, Leu-1128 to Leu-1155, Leu-1212 to Thr-1235, Ala-1351 to Glu-1374, Ala-1387 to Asn-1411, Ser-1421 to Val-1443, Ser-1447 to Gln-1468, Leu-1502 to Lys-1525, Arg-1532 to Lys-1553, Ala-1560 to Gly-1580, Glu-1588 to Glu-1609, Ala-1616 to Leu-1637, Ser-1642 to Ala-1662, and Lys-1670 to Thr-1691.

It belongs to the NLRP family.

The protein localises to the cytoplasm. Its function is as follows. Probable regulator of the NF-kappa-B and type I interferon signaling pathways. May also regulate the type II interferon signaling pathway. Plays a role in homeostatic control of innate immunity and in antiviral defense mechanisms. This is Protein NLRC5 (nlrc5) from Ictalurus punctatus (Channel catfish).